The primary structure comprises 317 residues: Phosphatidylglycerol--prolipoprotein diacylglyceryl transferase 2 (317 aa).

The next 4 membrane-spanning stretches (helical) occupy residues 19-39 (IPLR…VWLG), 51-71 (GVIA…GRLY), 93-113 (VWEG…GAWI), and 120-140 (IPLP…QAIG). Arg141 contributes to the a 1,2-diacyl-sn-glycero-3-phospho-(1'-sn-glycerol) binding site. 3 helical membrane passes run 180-200 (PTFL…LWAA), 211-230 (FALY…YLRI), and 241-261 (LNNW…VVSA). The tract at residues 275–317 (GAGADGRTDDPRPADASVGLASGPPGNSTPRRATESWNVRNRS) is disordered. Residues 299–317 (PGNSTPRRATESWNVRNRS) show a composition bias toward polar residues.

The protein belongs to the Lgt family.

The protein localises to the cell membrane. It carries out the reaction L-cysteinyl-[prolipoprotein] + a 1,2-diacyl-sn-glycero-3-phospho-(1'-sn-glycerol) = an S-1,2-diacyl-sn-glyceryl-L-cysteinyl-[prolipoprotein] + sn-glycerol 1-phosphate + H(+). It functions in the pathway protein modification; lipoprotein biosynthesis (diacylglyceryl transfer). Its function is as follows. Catalyzes the transfer of the diacylglyceryl group from phosphatidylglycerol to the sulfhydryl group of the N-terminal cysteine of a prolipoprotein, the first step in the formation of mature lipoproteins. The sequence is that of Phosphatidylglycerol--prolipoprotein diacylglyceryl transferase 2 from Streptomyces coelicolor (strain ATCC BAA-471 / A3(2) / M145).